An 895-amino-acid chain; its full sequence is Catenin alpha-3 (895 aa).

Positions 74 to 107 form a coiled coil; the sequence is EMIAKEATVLKEELAAALQEVRKESKALKVSAER. Ser160 bears the Phosphoserine mark. Positions 325–379 form a coiled coil; it reads RERIIAECNAIRQALQDLLTEYMSNTGKTERSNTLNTAIVNMSKKTRDLRRQLRK. Thr361 carries the phosphothreonine modification. Residues 635 to 660 form a disordered region; the sequence is DVSDLEDDHEVRSHTSIQTEGKTDRA. Residues Ser637 and Ser647 each carry the phosphoserine modification. Phosphothreonine is present on Thr649.

Belongs to the vinculin/alpha-catenin family. In terms of assembly, interacts with CTNNB1. Interacts with PKP2. Expressed in heart (at protein level).

The protein resides in the cytoplasm. It localises to the cytoskeleton. It is found in the cell junction. Its subcellular location is the desmosome. In terms of biological role, may be involved in formation of stretch-resistant cell-cell adhesion complexes. The polypeptide is Catenin alpha-3 (Mus musculus (Mouse)).